A 319-amino-acid polypeptide reads, in one-letter code: RNA polymerase II holoenzyme cyclin-like subunit (319 aa).

Positions Gln53–Ser142 constitute a Cyclin N-terminal domain. Low complexity predominate over residues Gln237–Ala251. The interval Gln237–Arg261 is disordered. The segment covering Glu252–Arg261 has biased composition (basic and acidic residues).

The protein belongs to the cyclin family. Cyclin C subfamily. As to quaternary structure, component of the SRB8-11 complex, a regulatory module of the Mediator complex. Interacts with SSN3/FCK1.

Its subcellular location is the nucleus. Its function is as follows. Component of the SRB8-11 complex. The SRB8-11 complex is a regulatory module of the Mediator complex which is itself involved in regulation of basal and activated RNA polymerase II-dependent transcription. The SRB8-11 complex may be involved in the transcriptional repression of a subset of genes regulated by Mediator. It may inhibit the association of the Mediator complex with RNA polymerase II to form the holoenzyme complex. The SRB8-11 complex phosphorylates the C-terminal domain (CTD) of the largest subunit of RNA polymerase II. May play a role in signal transduction pathways regulating secondary metabolism and fungal development (conidiation). In Gibberella moniliformis (Maize ear and stalk rot fungus), this protein is RNA polymerase II holoenzyme cyclin-like subunit (SSN8).